The sequence spans 729 residues: Polyribonucleotide nucleotidyltransferase (729 aa).

The Mg(2+) site is built by Asp-485 and Asp-491. Residues 552-611 (PRITTMKVAEDKIRTIIGKGGATIKGLIESTGVSIDIDDSGVIQLFSPDKMALEEAQKQI) form the KH domain. Residues 621–689 (GQTYQGKVSK…KQGRVKLEWK (69 aa)) form the S1 motif domain. The tract at residues 710–729 (TMEEQSEEINSGNKISEEEE) is disordered.

It belongs to the polyribonucleotide nucleotidyltransferase family. In terms of assembly, component of the RNA degradosome, which is a multiprotein complex involved in RNA processing and mRNA degradation. The cofactor is Mg(2+).

The protein localises to the cytoplasm. It carries out the reaction RNA(n+1) + phosphate = RNA(n) + a ribonucleoside 5'-diphosphate. Its function is as follows. Involved in mRNA degradation. Catalyzes the phosphorolysis of single-stranded polyribonucleotides processively in the 3'- to 5'-direction. The protein is Polyribonucleotide nucleotidyltransferase of Legionella pneumophila (strain Paris).